We begin with the raw amino-acid sequence, 146 residues long: Transcriptional regulator MraZ (146 aa).

SpoVT-AbrB domains are found at residues 5 to 47 and 76 to 119; these read EYYH…TITD and SVQV…AKER.

The protein belongs to the MraZ family. In terms of assembly, forms oligomers.

The protein localises to the cytoplasm. It localises to the nucleoid. This Dictyoglomus turgidum (strain DSM 6724 / Z-1310) protein is Transcriptional regulator MraZ.